We begin with the raw amino-acid sequence, 429 residues long: UDP-N-acetylglucosamine 1-carboxyvinyltransferase (429 aa).

22-23 contributes to the phosphoenolpyruvate binding site; that stretch reads KN. Arg93 contributes to the UDP-N-acetyl-alpha-D-glucosamine binding site. Cys117 serves as the catalytic Proton donor. Cys117 carries the post-translational modification 2-(S-cysteinyl)pyruvic acid O-phosphothioketal. UDP-N-acetyl-alpha-D-glucosamine is bound by residues 122–126, Asp313, and Ile335; that span reads RPVDQ.

It belongs to the EPSP synthase family. MurA subfamily.

The protein resides in the cytoplasm. It carries out the reaction phosphoenolpyruvate + UDP-N-acetyl-alpha-D-glucosamine = UDP-N-acetyl-3-O-(1-carboxyvinyl)-alpha-D-glucosamine + phosphate. It functions in the pathway cell wall biogenesis; peptidoglycan biosynthesis. Its function is as follows. Cell wall formation. Adds enolpyruvyl to UDP-N-acetylglucosamine. The chain is UDP-N-acetylglucosamine 1-carboxyvinyltransferase from Variovorax paradoxus (strain S110).